The sequence spans 241 residues: MVTLKMAIIFLMEQIRTPFSLIWTIMSPTVLFFFLHFNEIELHYGDTAWLGKQISWFVGYISFSVVLFNYCLYLVGRRESGFIATFVHNMDGRLLFIRSQLIASLIMSILYVFFFILVVLTGFQASPDYQIVMIILKSIYINAFMMVSLTFMASFRVTFQTASTIYSVLITVCMVSGIVSLKYNEGIVYWINQVNPIAIYSTILQSDQELSLMTIFFYSIMLIISIISALTFKTEPVWSSQ.

6 helical membrane-spanning segments follow: residues 17-35 (TPFS…FFFL), 54-72 (ISWF…NYCL), 105-123 (LIMS…LTGF), 131-149 (IVMI…MVSL), 163-181 (STIY…IVSL), and 212-230 (LMTI…ISAL).

Its subcellular location is the cell membrane. Together with two further proteins McbF and McbG this protein causes immunity to the peptide antibiotic microcin B17 (MccB17), which inhibits DNA replication in enterobacteriaceae. Immunity is determined by two different mechanisms. McbE is involved in the production of extracellular MccB17 and, in a complex with McbF it also serves as 'pump' for the export of active MccB17 from the cytoplasm to the periplasmic space. The chain is Protein McbE (mcbE) from Escherichia coli.